The chain runs to 385 residues: NADH-quinone oxidoreductase subunit H (385 aa).

The next 8 membrane-spanning stretches (helical) occupy residues 14-34, 80-100, 130-150, 172-192, 219-239, 280-300, 325-345, and 365-385; these read GLKL…LVWL, FLYY…FSAI, IGVG…TLLM, ISYE…YGTF, LPNW…SAAF, MMIA…IPYV, LIHF…FIWV, and MLPW…IASL.

This sequence belongs to the complex I subunit 1 family. As to quaternary structure, NDH-1 is composed of 14 different subunits. Subunits NuoA, H, J, K, L, M, N constitute the membrane sector of the complex.

The protein resides in the cell inner membrane. The catalysed reaction is a quinone + NADH + 5 H(+)(in) = a quinol + NAD(+) + 4 H(+)(out). Functionally, NDH-1 shuttles electrons from NADH, via FMN and iron-sulfur (Fe-S) centers, to quinones in the respiratory chain. The immediate electron acceptor for the enzyme in this species is believed to be ubiquinone. Couples the redox reaction to proton translocation (for every two electrons transferred, four hydrogen ions are translocated across the cytoplasmic membrane), and thus conserves the redox energy in a proton gradient. This subunit may bind ubiquinone. This is NADH-quinone oxidoreductase subunit H from Bdellovibrio bacteriovorus (strain ATCC 15356 / DSM 50701 / NCIMB 9529 / HD100).